We begin with the raw amino-acid sequence, 142 residues long: Large ribosomal subunit protein uL11 (142 aa).

The protein belongs to the universal ribosomal protein uL11 family. Part of the ribosomal stalk of the 50S ribosomal subunit. Interacts with L10 and the large rRNA to form the base of the stalk. L10 forms an elongated spine to which L12 dimers bind in a sequential fashion forming a multimeric L10(L12)X complex. Post-translationally, one or more lysine residues are methylated.

Its function is as follows. Forms part of the ribosomal stalk which helps the ribosome interact with GTP-bound translation factors. The protein is Large ribosomal subunit protein uL11 of Pectobacterium carotovorum subsp. carotovorum (strain PC1).